Consider the following 1033-residue polypeptide: Translation initiation factor IF-2 (1033 aa).

The segment at 49–432 (AFQQGGGNGR…APSVGGVMLP (384 aa)) is disordered. Positions 59–113 (SAGRPAAPKKAAPRPSAPSPAQAGPSQAAPAAGDRAAAPRPSAAPKAPAAQQPAA) are enriched in low complexity. Pro residues-rich tracts occupy residues 114-140 (PSAP…PAPA) and 148-164 (PAAP…PSGP). Residues 171 to 189 (PGAPKPGGARPSGPGQDRG) show a composition bias toward low complexity. Gly residues predominate over residues 190-201 (QQGGQGRPGGQR). Residues 236-246 (APRPQGGPRPG) are compositionally biased toward pro residues. Residues 247–268 (GPGGAPGGGPRPQGPGGQGGGP) are compositionally biased toward gly residues. Residues 305 to 314 (MMPQRPAAGP) show a composition bias toward low complexity. Residues 318–401 (PGGGGRGPGG…GTQGAFGRPG (84 aa)) show a composition bias toward gly residues. A compositionally biased stretch (basic residues) spans 405 to 414 (RRGRKSKRQR). Residues 526 to 698 (VRPPVVTVMG…VVLTADASLD (173 aa)) form the tr-type G domain. The segment at 535–542 (GHVDHGKT) is G1. 535 to 542 (GHVDHGKT) contributes to the GTP binding site. The interval 560–564 (GITQH) is G2. Residues 585 to 588 (DTPG) form a G3 region. GTP contacts are provided by residues 585–589 (DTPGH) and 639–642 (NKID). The segment at 639-642 (NKID) is G4. The segment at 675 to 677 (SAK) is G5.

It belongs to the TRAFAC class translation factor GTPase superfamily. Classic translation factor GTPase family. IF-2 subfamily.

Its subcellular location is the cytoplasm. One of the essential components for the initiation of protein synthesis. Protects formylmethionyl-tRNA from spontaneous hydrolysis and promotes its binding to the 30S ribosomal subunits. Also involved in the hydrolysis of GTP during the formation of the 70S ribosomal complex. This Streptomyces coelicolor (strain ATCC BAA-471 / A3(2) / M145) protein is Translation initiation factor IF-2.